The following is a 418-amino-acid chain: Protease LasA (418 aa).

The signal sequence occupies residues 1–31 (MQHKRSRALASPRSPFLFALLALAVGGTANA). A propeptide spanning residues 32-236 (HDDGLPAFRY…ARQLQAKAAL (205 aa)) is cleaved from the precursor. Zn(2+)-binding residues include histidine 259 and aspartate 272. Cysteine 301 and cysteine 347 are oxidised to a cystine. Catalysis depends on proton donor/acceptor residues histidine 317 and histidine 356. Histidine 358 lines the Zn(2+) pocket. A disulfide bond links cysteine 391 and cysteine 406.

The protein belongs to the peptidase M23A family. It depends on Zn(2+) as a cofactor.

It localises to the secreted. Functionally, involved in proteolysis and elastolysis (degradation of the host protein elastin). Has staphylolytic activity (degrades pentaglycine cross-links in cell wall peptidoglycan), preferring Gly-Gly-|-X substrates where X is Ala or Gly. Enhances the elastolytic but not proteolytic activity of elastase (lasB) and elastolytic activity of other proteases. Degradation of elastin is likely to contribute to the pathogenicity of P.aeruginosa. This chain is Protease LasA (lasA), found in Pseudomonas aeruginosa (strain UCBPP-PA14).